The primary structure comprises 456 residues: Glutamate--tRNA ligase 2 (456 aa).

The 'HIGH' region motif lies at Pro-8 to Asn-18. A 'KMSKS' region motif is present at residues Gly-249–Arg-253. Lys-252 is an ATP binding site.

The protein belongs to the class-I aminoacyl-tRNA synthetase family. Glutamate--tRNA ligase type 1 subfamily. Monomer.

The protein resides in the cytoplasm. The catalysed reaction is tRNA(Glu) + L-glutamate + ATP = L-glutamyl-tRNA(Glu) + AMP + diphosphate. Its function is as follows. Catalyzes the attachment of glutamate to tRNA(Glu) in a two-step reaction: glutamate is first activated by ATP to form Glu-AMP and then transferred to the acceptor end of tRNA(Glu). This is Glutamate--tRNA ligase 2 from Bartonella bacilliformis (strain ATCC 35685 / KC583 / Herrer 020/F12,63).